A 491-amino-acid polypeptide reads, in one-letter code: MAAVREVGSKAELEAAAGGARAAAVHFWAAWCEASKQMDEVFAHLAVDFSHAVFLRVEAEEQPEISEAYGVTAVPYFVFLKEGKTVDTLEGANPASLANKVAKLAGPASVAESAVPASLGVAAGPAVLEKVQEMAQQNGASATSSAEDALNKRLEQLVNSHPVFLFMKGTPEQPRCGFSRKVVDVLKQEGVEFGSFDILTDNDVREGMKKFSNWPTFPQLYCKGELLGGCDIVIAMHESGELKDVFKEHNIPLQPQGSKNEEAVKAKPDTEKSGAVSEPALLTAAQKERLESLVNFSTVMAFIKGTPEEPKCGFSGKLVHILKQEKIPFSSFDILTDDEVRQGLKLLSNWPSYPQLYINGELVGGSDIVMEMHKSGELKKVLSEKGIVAKESLEDRLKALISSAPVMLFMKGTPDAPRCGFSSKVVNALKQAGVSFGAFDILSDEEVRQGLKTYSNWPTFPQLYYKSELIGGCDIVLELEKSGELKSTLSE.

3 Glutaredoxin domains span residues 151–253 (NKRL…NIPL), 287–389 (KERL…GIVA), and 394–491 (EDRL…TLSE). Lys-411 serves as a coordination point for glutathione. Cys-419 serves as a coordination point for [2Fe-2S] cluster. Residues Arg-448, Phe-460, and 473-474 (CD) each bind glutathione.

Belongs to the glutaredoxin family. CGFS subfamily.

Its subcellular location is the cytoplasm. Its function is as follows. May only reduce GSH-thiol disulfides, but not protein disulfides. The chain is Monothiol glutaredoxin-S11 (GRXS11) from Oryza sativa subsp. japonica (Rice).